Consider the following 210-residue polypeptide: Large ribosomal subunit protein uL4 (210 aa).

Polar residues predominate over residues 41–51 (ANARQGTQSTK). Disordered regions lie at residues 41–60 (ANARQGTQSTKTRGEVQGSS) and 67–98 (KGTGNARMGTNRSPVRRHGGVAFGPRPRDFSK).

Belongs to the universal ribosomal protein uL4 family. Part of the 50S ribosomal subunit.

One of the primary rRNA binding proteins, this protein initially binds near the 5'-end of the 23S rRNA. It is important during the early stages of 50S assembly. It makes multiple contacts with different domains of the 23S rRNA in the assembled 50S subunit and ribosome. Its function is as follows. Forms part of the polypeptide exit tunnel. This is Large ribosomal subunit protein uL4 from Dehalococcoides mccartyi (strain ATCC BAA-2100 / JCM 16839 / KCTC 5957 / BAV1).